We begin with the raw amino-acid sequence, 1001 residues long: X-linked retinitis pigmentosa GTPase regulator (1001 aa).

RCC1 repeat units lie at residues 54–105 (NKLY…STDT), 106–158 (GGVY…LTED), 159–208 (GKLF…VTMD), 209–261 (GELY…LTEK), 262–313 (VVYA…MTEL), and 314–367 (GLLY…FATP). Positions 404 to 428 (SLSARLRRRERERPPCSASMVGTLP) are disordered. Residue Ser-518 is modified to Phosphoserine. 2 stretches are compositionally biased toward basic and acidic residues: residues 631-641 (KKIRESEENSK) and 659-671 (EDNK…RRSS). Disordered stretches follow at residues 631-738 (KKIR…WYDR), 794-869 (NLEF…EGSE), 902-925 (PKGH…DPTS), and 962-1001 (GDQI…CTIL). Acidic residues-rich tracts occupy residues 679-691 (SETE…DSYM) and 717-731 (EKDE…EVET). Basic and acidic residues-rich tracts occupy residues 794–818 (NLEF…EKEA), 847–857 (EERKEGEKEIV), and 902–911 (PKGHMYDRVK). Positions 976–1001 (QNHMGQNLQDSTTPNMEGKSKSCTIL) are enriched in polar residues. At Cys-998 the chain carries Cysteine methyl ester. Residue Cys-998 is the site of S-geranylgeranyl cysteine attachment. A propeptide spans 999-1001 (TIL) (removed in mature form).

In terms of assembly, interacts with SPATA7. Interacts with PDE6D. Interacts with RPGRIP1 and RPGRIP1L; PDE6D, RPGRIP1 and RPGRIP1L may compete for the same binding sites. Interacts with NPM1. Interacts with PDE6D. Isoform 5 interacts (via N-terminus) with SMC1A and SMC3. Isoform 5 interacts with CEP290. Interacts with WHRN. Interacts with RAB37 and RAB8A (in GDP-bound forms); functions as GEF for RAB37 and RAB8A. Prenylated. Expressed in the retina (at protein level). Located mainly in the connecting cilia between the outer segment and inner segment and also observed in the outer plexiform layer, inner plexiform layer, and ganglion cell layer of the retinas. Isoform 1: Expressed in the retina (at protein level). Isoform 5: Expressed in the retina (at protein level). Expressed in the brain. Expressed in the testis (at protein level). Expressed in kidney (at protein level).

It localises to the golgi apparatus. The protein localises to the cytoplasm. Its subcellular location is the cytoskeleton. The protein resides in the microtubule organizing center. It is found in the centrosome. It localises to the cell projection. The protein localises to the cilium. Its subcellular location is the cilium basal body. The protein resides in the cilium axoneme. It is found in the flagellum axoneme. Acts as a guanine-nucleotide releasing factor (GEF) for RAB8A and RAB37 by promoting the conversion of inactive RAB-GDP to the active form RAB-GTP. GEF activity towards RAB8A may facilitate ciliary trafficking by modulating ciliary intracellular localization of RAB8A. GEF activity towards RAB37 maintains autophagic homeostasis and retinal function. Involved in photoreceptor integrity. May control cilia formation by regulating actin stress filaments and cell contractility. May be involved in microtubule organization and regulation of transport in primary cilia. Its function is as follows. Isoform 5 may play a critical role in spermatogenesis and in intraflagellar transport processes. The protein is X-linked retinitis pigmentosa GTPase regulator of Mus musculus (Mouse).